A 145-amino-acid chain; its full sequence is Bacilliredoxin SAR1592 (145 aa).

This sequence belongs to the bacilliredoxin family.

This Staphylococcus aureus (strain MRSA252) protein is Bacilliredoxin SAR1592.